Here is a 139-residue protein sequence, read N- to C-terminus: Ribonuclease homolog (139 aa).

Residues 1-23 form the signal peptide; sequence MAMSSLWWTAILLLALTVSMCYG. Residue H34 is the Proton acceptor of the active site. 3 cysteine pairs are disulfide-bonded: C49-C102, C64-C111, and C82-C126. 65 to 69 serves as a coordination point for substrate; the sequence is KSFNT. The active-site Proton donor is the H133.

The protein belongs to the pancreatic ribonuclease family.

It localises to the secreted. The polypeptide is Ribonuclease homolog (Gallus gallus (Chicken)).